The sequence spans 330 residues: tRNA (guanine-N(7)-)-methyltransferase (330 aa).

The disordered stretch occupies residues 1–27 (MSTPPAKRQKRDQYRKRAAAAANEDTG). Residues 7–18 (KRQKRDQYRKRA) show a composition bias toward basic residues. S-adenosyl-L-methionine contacts are provided by residues G95 and 118 to 119 (EI). Positions 138 to 185 (QNQLKNSSTTASESPAPAIPAEPATDGASPDAASTPETSNSPVPGGYQ) are disordered. Positions 144–162 (SSTTASESPAPAIPAEPAT) are enriched in low complexity. Positions 172–185 (TPETSNSPVPGGYQ) are enriched in polar residues. S-adenosyl-L-methionine-binding positions include 193 to 194 (NT) and C213. Residue D216 is part of the active site. 302–304 (TEE) lines the S-adenosyl-L-methionine pocket.

It belongs to the class I-like SAM-binding methyltransferase superfamily. TrmB family. In terms of assembly, forms a complex with trm82.

It localises to the nucleus. It carries out the reaction guanosine(46) in tRNA + S-adenosyl-L-methionine = N(7)-methylguanosine(46) in tRNA + S-adenosyl-L-homocysteine. It functions in the pathway tRNA modification; N(7)-methylguanine-tRNA biosynthesis. Functionally, catalyzes the formation of N(7)-methylguanine at position 46 (m7G46) in tRNA. This chain is tRNA (guanine-N(7)-)-methyltransferase (trm8), found in Aspergillus oryzae (strain ATCC 42149 / RIB 40) (Yellow koji mold).